Reading from the N-terminus, the 269-residue chain is 3-methyl-2-oxobutanoate hydroxymethyltransferase (269 aa).

Residues Asp-50 and Asp-89 each coordinate Mg(2+). Residues 50–51 (DS), Asp-89, and Lys-118 each bind 3-methyl-2-oxobutanoate. Residue Glu-120 coordinates Mg(2+). Glu-187 acts as the Proton acceptor in catalysis.

This sequence belongs to the PanB family. Homodecamer; pentamer of dimers. Mg(2+) is required as a cofactor.

It localises to the cytoplasm. The catalysed reaction is 3-methyl-2-oxobutanoate + (6R)-5,10-methylene-5,6,7,8-tetrahydrofolate + H2O = 2-dehydropantoate + (6S)-5,6,7,8-tetrahydrofolate. The protein operates within cofactor biosynthesis; (R)-pantothenate biosynthesis; (R)-pantoate from 3-methyl-2-oxobutanoate: step 1/2. Its function is as follows. Catalyzes the reversible reaction in which hydroxymethyl group from 5,10-methylenetetrahydrofolate is transferred onto alpha-ketoisovalerate to form ketopantoate. This is 3-methyl-2-oxobutanoate hydroxymethyltransferase from Aliarcobacter butzleri (strain RM4018) (Arcobacter butzleri).